Here is a 422-residue protein sequence, read N- to C-terminus: 5-methylthioadenosine/S-adenosylhomocysteine deaminase 1 (422 aa).

Residues His-56 and His-58 each contribute to the Zn(2+) site. Glu-85 and His-174 together coordinate substrate. His-201 serves as a coordination point for Zn(2+). Residues Glu-204 and Asp-290 each contribute to the substrate site. Asp-290 contributes to the Zn(2+) binding site.

It belongs to the metallo-dependent hydrolases superfamily. MTA/SAH deaminase family. Requires Zn(2+) as cofactor.

It catalyses the reaction S-adenosyl-L-homocysteine + H2O + H(+) = S-inosyl-L-homocysteine + NH4(+). It carries out the reaction S-methyl-5'-thioadenosine + H2O + H(+) = S-methyl-5'-thioinosine + NH4(+). Catalyzes the deamination of 5-methylthioadenosine and S-adenosyl-L-homocysteine into 5-methylthioinosine and S-inosyl-L-homocysteine, respectively. Is also able to deaminate adenosine. The chain is 5-methylthioadenosine/S-adenosylhomocysteine deaminase 1 from Archaeoglobus fulgidus (strain ATCC 49558 / DSM 4304 / JCM 9628 / NBRC 100126 / VC-16).